The primary structure comprises 289 residues: 4-diphosphocytidyl-2-C-methyl-D-erythritol kinase (289 aa).

K10 is an active-site residue. 94-104 (PVAAGLAGGSS) provides a ligand contact to ATP. The active site involves D136.

This sequence belongs to the GHMP kinase family. IspE subfamily.

It carries out the reaction 4-CDP-2-C-methyl-D-erythritol + ATP = 4-CDP-2-C-methyl-D-erythritol 2-phosphate + ADP + H(+). It functions in the pathway isoprenoid biosynthesis; isopentenyl diphosphate biosynthesis via DXP pathway; isopentenyl diphosphate from 1-deoxy-D-xylulose 5-phosphate: step 3/6. Its function is as follows. Catalyzes the phosphorylation of the position 2 hydroxy group of 4-diphosphocytidyl-2C-methyl-D-erythritol. The sequence is that of 4-diphosphocytidyl-2-C-methyl-D-erythritol kinase from Bacillus velezensis (strain DSM 23117 / BGSC 10A6 / LMG 26770 / FZB42) (Bacillus amyloliquefaciens subsp. plantarum).